A 355-amino-acid polypeptide reads, in one-letter code: MRISDRGYGEEGRERLTLVPENVDDLWHLAHVLEPGDLVEGDTTRRIQRNDDQMRDTGGQREHLFVTLQVDEVEFARFANRLRVSGVIVGCSREDQLNAHHTINVEEHDEITVEKHFKPDQTERLEEATEAAENPDVAIATVEEGAAYVHTVQQYGTEEYASFTKPTGKGDYSRPREELFAELGEALAHLDADAVILAGPGFTKQDALDYITEEYRDLADRITTVDTSAAGDRGVHEVLKRGAVDEVQKETRISKEATLIDDLTAEIAQGAKATYGPEDVAEAAEFGAIETLLVVDDRLRTERQGEGDWSIDVNEVIESVEQQGGDVVVFSSEFAPGEQLSNLGGIAAILRYRLQ.

Belongs to the eukaryotic release factor 1 family. Pelota subfamily. In terms of assembly, monomer. Requires a divalent metal cation as cofactor.

It is found in the cytoplasm. May function in recognizing stalled ribosomes, interact with stem-loop structures in stalled mRNA molecules, and effect endonucleolytic cleavage of the mRNA. May play a role in the release non-functional ribosomes and degradation of damaged mRNAs. Has endoribonuclease activity. The polypeptide is Protein pelota homolog (Halorubrum lacusprofundi (strain ATCC 49239 / DSM 5036 / JCM 8891 / ACAM 34)).